Here is a 1187-residue protein sequence, read N- to C-terminus: Phospholipid-transporting ATPase IH (1187 aa).

Over 1–61 (MDCSLLRTLV…SSKYTFWNFI (61 aa)) the chain is Cytoplasmic. Residues 62–82 (PKNLFEQFRRIANFYFLIIFL) form a helical membrane-spanning segment. The Extracellular portion of the chain corresponds to 83 to 88 (VQLIID). Residues 89 to 110 (TPTSPVTSGLPLFFVITVTAIK) form a helical membrane-spanning segment. Over 111 to 296 (QGYEDWLRHK…SAVEKSMNTF (186 aa)) the chain is Cytoplasmic. A helical membrane pass occupies residues 297 to 318 (LIVYLCILVSKALINTVLKYVW). Residues 319-349 (QSEPFRDEPWYNEKTESERQRNLFLRAFTDF) are Extracellular-facing. Residues 350–372 (LAFMVLFNYIIPVSMYVTVEMQK) traverse the membrane as a helical segment. Over 373–884 (FLGSYFITWD…GHFYYIRISE (512 aa)) the chain is Cytoplasmic. Catalysis depends on Asp-414, which acts as the 4-aspartylphosphate intermediate. The ATP site is built by Asp-414, Lys-415, Thr-416, Glu-513, Phe-555, Lys-578, Arg-609, Thr-689, Gly-690, and Asp-691. Asp-414 contributes to the Mg(2+) binding site. Thr-416 lines the Mg(2+) pocket. Residue Ser-740 is modified to Phosphoserine. ATP is bound by residues Arg-801 and Lys-807. Residue Asp-828 participates in Mg(2+) binding. Residues Asn-831 and Asp-832 each contribute to the ATP site. Residue Asp-832 participates in Mg(2+) binding. A helical transmembrane segment spans residues 885–905 (LVQYFFYKNVCFIFPQFLYQF). Residues 906 to 917 (FCGFSQQTLYDT) lie on the Extracellular side of the membrane. Residues 918–937 (AYLTLYNISFTSLPILLYSL) form a helical membrane-spanning segment. Residues 938–967 (MEQHVGIDVLKRDPTLYRDIAKNALLRWRV) lie on the Cytoplasmic side of the membrane. Residues 968-989 (FIYWTFLGVFDALVFFFGAYFI) traverse the membrane as a helical segment. Residues 990–1003 (FENTTVTINGQMFG) lie on the Extracellular side of the membrane. The helical transmembrane segment at 1004 to 1026 (NWTFGTLVFTVMVLTVTLKLALD) threads the bilayer. Topologically, residues 1027–1032 (THYWTW) are cytoplasmic. Residues 1033–1053 (INHFVIWGSLLFYIAFSLLWG) form a helical membrane-spanning segment. At 1054 to 1071 (GVIWPFLSYQRMYYVFIS) the chain is on the extracellular side. The helical transmembrane segment at 1072-1096 (MLSSGPAWLGIILLVTVGLLPDVLK) threads the bilayer. Over 1097 to 1138 (KVLCRQLWPTATERTQNIQHQDSISEFTPLASLPSWGAQGSR) the chain is Cytoplasmic. 2 positions are modified to phosphoserine: Ser-1148 and Ser-1158.

It belongs to the cation transport ATPase (P-type) (TC 3.A.3) family. Type IV subfamily. As to quaternary structure, component of a P4-ATPase flippase complex which consists of a catalytic alpha subunit ATP11A and an accessory beta subunit TMEM30A. Mg(2+) is required as a cofactor. In terms of processing, proteolytically cleaved by CASP3. As to expression, widely expressed. Expressed in myoblasts. Expressed in retina, brain, liver, testes and kidney (at protein level). Expressed in the inner ear.

It is found in the cell membrane. Its subcellular location is the early endosome. It localises to the recycling endosome. The protein localises to the endoplasmic reticulum membrane. The catalysed reaction is ATP + H2O + phospholipidSide 1 = ADP + phosphate + phospholipidSide 2.. It catalyses the reaction a 1,2-diacyl-sn-glycero-3-phospho-L-serine(out) + ATP + H2O = a 1,2-diacyl-sn-glycero-3-phospho-L-serine(in) + ADP + phosphate + H(+). The enzyme catalyses a 1,2-diacyl-sn-glycero-3-phosphoethanolamine(out) + ATP + H2O = a 1,2-diacyl-sn-glycero-3-phosphoethanolamine(in) + ADP + phosphate + H(+). Its function is as follows. Catalytic component of a P4-ATPase flippase complex which catalyzes the hydrolysis of ATP coupled to the transport of aminophospholipids, phosphatidylserines (PS) and phosphatidylethanolamines (PE), from the outer to the inner leaflet of the plasma membrane. Does not show flippase activity toward phosphatidylcholine (PC). Contributes to the maintenance of membrane lipid asymmetry with a specific role in morphogenesis of muscle cells. In myoblasts, mediates PS enrichment at the inner leaflet of plasma membrane, triggering PIEZO1-dependent Ca2+ influx and Rho GTPases signal transduction, subsequently leading to the assembly of cortical actomyosin fibers and myotube formation. The protein is Phospholipid-transporting ATPase IH (Atp11a) of Mus musculus (Mouse).